Here is a 137-residue protein sequence, read N- to C-terminus: Large ribosomal subunit protein uL16 (137 aa).

Belongs to the universal ribosomal protein uL16 family. As to quaternary structure, part of the 50S ribosomal subunit.

Its function is as follows. Binds 23S rRNA and is also seen to make contacts with the A and possibly P site tRNAs. This Stenotrophomonas maltophilia (strain K279a) protein is Large ribosomal subunit protein uL16.